A 52-amino-acid polypeptide reads, in one-letter code: Thiocillin (52 aa).

A propeptide spanning residues 1–38 (MSEIKKALNTLEIEDFDAIEMVDVDAMPENEALEIMGA) is cleaved from the precursor. Positions 39-40 (SC) form a cross-link, thiazole-4-carboxylic acid (Ser-Cys). The pyridine-2,5-dicarboxylic acid (Ser-Cys) (with S-48) cross-link spans 39 to 47 (SCTTCVCTC). A cross-link (pyridine-2,5-dicarboxylic acid (Ser-Ser) (with C-47)) is located at residues 39–48 (SCTTCVCTCS). T42 bears the (Z)-2,3-didehydrobutyrine mark. The thiazole-4-carboxylic acid (Thr-Cys) cross-link spans 42–43 (TC). V44 is subject to 3-hydroxyvaline (Val); partial. A cross-link (thiazole-4-carboxylic acid (Val-Cys)) is located at residues 44 to 45 (VC). T46 is modified (O-methylthreonine; partial). A cross-link (thiazole-4-carboxylic acid (Thr-Cys)) is located at residues 46 to 47 (TC). A cross-link (thiazole-4-carboxylic acid (Ser-Cys)) is located at residues 48–49 (SC). The segment at residues 49-50 (CC) is a cross-link (thiazole-4-carboxylic acid (Cys-Cys)). The residue at position 51 (T51) is a (Z)-2,3-didehydrobutyrine. T52 carries the post-translational modification 1-amino-2-propanone; alternate. A Decarboxylated threonine; alternate modification is found at T52.

The protein belongs to the thiocillin family. Maturation of thiazole and oxazole containing antibiotics involves the enzymatic condensation of a Cys, Ser or Thr with the alpha-carbonyl of the preceding amino acid to form a thioether or ether bond, then dehydration to form a double bond with the alpha-amino nitrogen. Thiazoline or oxazoline ring are dehydrogenated to form thiazole or oxazole rings. Post-translationally, maturation of pyridinyl containing antibiotics involves the cross-linking of a Ser and a Cys-Ser pair usually separated by 7 or 8 residues along the peptide chain. The Ser residues are dehydrated to didehydroalanines, then bonded between their beta carbons. The alpha carbonyl of the Cys condenses with alpha carbon of the first Ser to form a pyridinyl ring. The ring may be multiply dehydrogenated to form a pyridine ring with loss of the amino nitrogen of the first Ser. In terms of processing, the 8 possible modification isomers, differing in the presence of modifications at three positions, have been characterized in PubMed:19196969. Val-44 is modified to 3-hydroxyvaline in forms thiocillin I, thiocillin II, YM-266183, and YM-266184. Thr-46 is modified to O-methylthreonine in forms thiocillin II, thiocillin III, thiocillin IV, and YM-266184. Thr-52 is decarboxylated to (R)-1-aminopropan-2-ol in forms micrococcin P1, thiocillin I, thiocillin II, and thiocillin III. Thr-52 is decarboxylated and oxidized to 1-amino-2-propanone in forms micrococcin P2, YM-266183, YM-266184. and thiocillin IV. The structure of 2,3-didehydrobutyrines is not discussed in PubMed:19196969. However, in Fig. 3 the residues are diagrammed as Z-isomers.

The protein localises to the secreted. In terms of biological role, has bacteriocidal activity against Gram-positive bacteria, but not against Gram-negative bacteria. Inhibits bacterial protein biosynthesis by acting on the elongation factor Tu (EF-Tu). The sequence is that of Thiocillin from Bacillus cereus (strain ATCC 14579 / DSM 31 / CCUG 7414 / JCM 2152 / NBRC 15305 / NCIMB 9373 / NCTC 2599 / NRRL B-3711).